The following is a 612-amino-acid chain: BTB/POZ domain-containing protein 9 (612 aa).

In terms of domain architecture, BTB spans 36-104 (GDVTFVVEKK…IYTGRATLTD (69 aa)). Positions 142–240 (VCMTFDVASL…SLTELLNVVR (99 aa)) constitute a BACK domain. A disordered region spans residues 560 to 612 (QSSQKEENSEESGTGDTSLAGQQLDSHALRAPSGSSLPSSPGSNSRSPNRQHQ). Positions 573–584 (TGDTSLAGQQLD) are enriched in polar residues. Residues 588–612 (LRAPSGSSLPSSPGSNSRSPNRQHQ) show a composition bias toward low complexity.

As to expression, detected in the brain (at protein level). Moderately expressed in all specific brain regions examined. Expressed in the dopaminergic neurons of the substantia nigra and A11 neurons. Highly expressed in kidney and moderately expressed in all other adult and fetal tissues.

This is BTB/POZ domain-containing protein 9 (BTBD9) from Homo sapiens (Human).